Consider the following 182-residue polypeptide: Transcription termination/antitermination protein NusG (182 aa).

This sequence belongs to the NusG family.

Functionally, participates in transcription elongation, termination and antitermination. In Chlamydia trachomatis serovar D (strain ATCC VR-885 / DSM 19411 / UW-3/Cx), this protein is Transcription termination/antitermination protein NusG.